A 540-amino-acid polypeptide reads, in one-letter code: V-set and immunoglobulin domain-containing protein 10 (540 aa).

The first 30 residues, 1-30 (MAAGGSAPEPRVLVCLGALLAGWVAVGLEA), serve as a signal peptide directing secretion. Ig-like C2-type domains follow at residues 31–119 (VVIG…WLQV), 123–215 (PYQI…RKVT), 223–309 (PPPS…VQIR), and 311–404 (PSLL…IWLS). The Extracellular portion of the chain corresponds to 31–413 (VVIGEVHENV…SVKEPLNIGG (383 aa)). N-linked (GlcNAc...) asparagine glycans are attached at residues Asn-39, Asn-46, Asn-70, Asn-108, Asn-138, Asn-171, Asn-180, and Asn-198. Cys-44 and Cys-103 are joined by a disulfide. 2 disulfides stabilise this stretch: Cys-153–Cys-201 and Cys-245–Cys-290. An N-linked (GlcNAc...) asparagine glycan is attached at Asn-326. Cys-331 and Cys-388 are oxidised to a cystine. A helical membrane pass occupies residues 414–434 (IVGTIVSLLLLGLAIISGLLL). The Cytoplasmic segment spans residues 435–540 (HYSPVFCWKV…DIVQEEDRPV (106 aa)). Residues 461–477 (DSEEEEEEEEEEEEDAA) show a composition bias toward acidic residues. 2 disordered regions span residues 461-500 (DSEE…QDHI) and 513-540 (QMGN…DRPV). Residues 482–500 (EGAREREELPKEIPKQDHI) show a composition bias toward basic and acidic residues. Residues 521 to 534 (LQDDSSEEQSDIVQ) show a composition bias toward acidic residues.

The protein resides in the membrane. The sequence is that of V-set and immunoglobulin domain-containing protein 10 (VSIG10) from Homo sapiens (Human).